The following is a 391-amino-acid chain: Imidazolonepropionase (391 aa).

2 residues coordinate Fe(3+): His72 and His74. Zn(2+) contacts are provided by His72 and His74. 4-imidazolone-5-propanoate contacts are provided by Arg81, Tyr139, and His166. N-formimidoyl-L-glutamate is bound at residue Tyr139. His229 contributes to the Fe(3+) binding site. His229 is a binding site for Zn(2+). Gln232 contributes to the 4-imidazolone-5-propanoate binding site. Position 303 (Asp303) interacts with Fe(3+). Asp303 serves as a coordination point for Zn(2+). Residues Asn305 and Gly307 each contribute to the N-formimidoyl-L-glutamate site. Residue Ser308 coordinates 4-imidazolone-5-propanoate.

Belongs to the metallo-dependent hydrolases superfamily. HutI family. It depends on Zn(2+) as a cofactor. Fe(3+) serves as cofactor.

The protein resides in the cytoplasm. The catalysed reaction is 4-imidazolone-5-propanoate + H2O = N-formimidoyl-L-glutamate. The protein operates within amino-acid degradation; L-histidine degradation into L-glutamate; N-formimidoyl-L-glutamate from L-histidine: step 3/3. Catalyzes the hydrolytic cleavage of the carbon-nitrogen bond in imidazolone-5-propanoate to yield N-formimidoyl-L-glutamate. It is the third step in the universal histidine degradation pathway. This Streptomyces coelicolor (strain ATCC BAA-471 / A3(2) / M145) protein is Imidazolonepropionase.